The chain runs to 113 residues: Large ribosomal subunit protein uL22 (113 aa).

The protein belongs to the universal ribosomal protein uL22 family. In terms of assembly, part of the 50S ribosomal subunit.

Its function is as follows. This protein binds specifically to 23S rRNA; its binding is stimulated by other ribosomal proteins, e.g. L4, L17, and L20. It is important during the early stages of 50S assembly. It makes multiple contacts with different domains of the 23S rRNA in the assembled 50S subunit and ribosome. The globular domain of the protein is located near the polypeptide exit tunnel on the outside of the subunit, while an extended beta-hairpin is found that lines the wall of the exit tunnel in the center of the 70S ribosome. In Neorickettsia sennetsu (strain ATCC VR-367 / Miyayama) (Ehrlichia sennetsu), this protein is Large ribosomal subunit protein uL22.